A 315-amino-acid polypeptide reads, in one-letter code: MTSTSTPAVVIAGPTASGKSGLAVRIAREFGGVVINADSMQVTDALPLLTARPAPGDMALAPHRLYAVLPPTELCSAARWRDMAAMEMAAAWQAGMLPILTGGTGLYLKAVMEGLSPIPEIPESIRAEARTLLAEMGNAAFHNRLAKHDPLMAERLDSGNSQRLARAWEVVTATGRSLAEWQDEPREGAVEARWFSLVLDPERPRLYAQCESRFRAMVTAGALDEVRDFEALRLPPDLPIQKALGRRELAAHLAGETDLDTAIAAACQATRNYAKRQGTWFRHQMMASLTASEQLSESLIATIFLKIRQHLLTAP.

13–20 lines the ATP pocket; sequence GPTASGKS. Substrate is bound at residue 15-20; sequence TASGKS. Interaction with substrate tRNA regions lie at residues 38–41 and 162–166; these read DSMQ and QRLAR.

This sequence belongs to the IPP transferase family. As to quaternary structure, monomer. Requires Mg(2+) as cofactor.

It carries out the reaction adenosine(37) in tRNA + dimethylallyl diphosphate = N(6)-dimethylallyladenosine(37) in tRNA + diphosphate. Catalyzes the transfer of a dimethylallyl group onto the adenine at position 37 in tRNAs that read codons beginning with uridine, leading to the formation of N6-(dimethylallyl)adenosine (i(6)A). In Paramagnetospirillum magneticum (strain ATCC 700264 / AMB-1) (Magnetospirillum magneticum), this protein is tRNA dimethylallyltransferase.